A 321-amino-acid chain; its full sequence is D-alanine--D-alanine ligase (321 aa).

The 195-residue stretch at 121–315 (RSWFLTNNIN…FVNLIEEILK (195 aa)) folds into the ATP-grasp domain. 148-199 (IKRPYVIKPFTQGSSIGVEVIFEEDDFNFANYDFPYGDEVIIEKYIKGRELQ) serves as a coordination point for ATP. Mg(2+) is bound by residues Glu-268, Glu-282, and Asn-284.

Belongs to the D-alanine--D-alanine ligase family. Mg(2+) is required as a cofactor. Requires Mn(2+) as cofactor.

It localises to the cytoplasm. It catalyses the reaction 2 D-alanine + ATP = D-alanyl-D-alanine + ADP + phosphate + H(+). The protein operates within cell wall biogenesis; peptidoglycan biosynthesis. Its function is as follows. Cell wall formation. This chain is D-alanine--D-alanine ligase, found in Rickettsia bellii (strain RML369-C).